Reading from the N-terminus, the 544-residue chain is MAAKEIKYDSVARDKVMKGVDTLANAVKVTLGPRGRNVVIEKAWGGPTITKDGVTVAKEIELEDKFENMGAQMVREVASKTSDMAGDGTTTATILAQAIYREGTKLAAAGMNPMSLKRGIDKSVQLVIDELKKISKDIRDKKEITQVGTISANNDNTIGEIISEAMEKVGKEGVITVEEAKGMETTLEIVEGMQFDRGYVSPYFVTDPEKMEVVMEDPYILLYDKKISVMQDLVPILEQIARSGRPMLIVSEDLEGEALATLVVNNIRGTLKCAAVKAPGFGDRRKAMLEDIAILTGGKVVSEELGIKLDSITLTDLGTCKRLHITKDNTTIVDGAGSQADIEGRVKQIRTQIEETTSDYDREKLQERLAKLVGGVAVIKVGAATEIEMKEKKARVEDALHATRAAVEEGIVPGGGVALLRTLPALAGMDLPDDERPGLNIVKRAVEEPMRQIAANAGFEGSIVVEKVKENTGNFGFNADTEKYVDMMEAGIIDPTKVVRFALQNAASVASLLLTTEAMIAEAPKKKGAGMPGGMPPDMGDMEY.

ATP is bound by residues 30–33, K51, 87–91, G415, and D494; these read TLGP and DGTTT.

Belongs to the chaperonin (HSP60) family. Forms a cylinder of 14 subunits composed of two heptameric rings stacked back-to-back. Interacts with the co-chaperonin GroES.

The protein localises to the cytoplasm. The enzyme catalyses ATP + H2O + a folded polypeptide = ADP + phosphate + an unfolded polypeptide.. Functionally, together with its co-chaperonin GroES, plays an essential role in assisting protein folding. The GroEL-GroES system forms a nano-cage that allows encapsulation of the non-native substrate proteins and provides a physical environment optimized to promote and accelerate protein folding. The protein is Chaperonin GroEL 1 of Syntrophus aciditrophicus (strain SB).